The sequence spans 457 residues: tRNA modification GTPase MnmE (457 aa).

Residues Arg25, Glu87, and Arg126 each coordinate (6S)-5-formyl-5,6,7,8-tetrahydrofolate. Residues Gly223 to Phe377 enclose the TrmE-type G domain. Asn233 is a binding site for K(+). GTP contacts are provided by residues Asn233–Ser238, Thr252–Thr258, and Asp277–Gly280. Residue Ser237 coordinates Mg(2+). Residues Thr252, Ile254, and Thr257 each coordinate K(+). Residue Thr258 coordinates Mg(2+). Lys457 is a (6S)-5-formyl-5,6,7,8-tetrahydrofolate binding site.

This sequence belongs to the TRAFAC class TrmE-Era-EngA-EngB-Septin-like GTPase superfamily. TrmE GTPase family. Homodimer. Heterotetramer of two MnmE and two MnmG subunits. The cofactor is K(+).

It localises to the cytoplasm. Its function is as follows. Exhibits a very high intrinsic GTPase hydrolysis rate. Involved in the addition of a carboxymethylaminomethyl (cmnm) group at the wobble position (U34) of certain tRNAs, forming tRNA-cmnm(5)s(2)U34. In Streptococcus pneumoniae serotype 4 (strain ATCC BAA-334 / TIGR4), this protein is tRNA modification GTPase MnmE.